The following is a 338-amino-acid chain: Ketol-acid reductoisomerase (NADP(+)) (338 aa).

Residues 1–181 (MKVYYDKDAD…GGGRTGIIET (181 aa)) enclose the KARI N-terminal Rossmann domain. Residues 24-27 (YGSQ), arginine 47, serine 50, serine 52, and 82-85 (DEFQ) contribute to the NADP(+) site. Residue histidine 107 is part of the active site. Glycine 133 contacts NADP(+). One can recognise a KARI C-terminal knotted domain in the interval 182–327 (TFKDETETDL…AKLRSMMPWI (146 aa)). 4 residues coordinate Mg(2+): aspartate 190, glutamate 194, glutamate 226, and glutamate 230. Residue serine 251 participates in substrate binding.

The protein belongs to the ketol-acid reductoisomerase family. Mg(2+) serves as cofactor.

It carries out the reaction (2R)-2,3-dihydroxy-3-methylbutanoate + NADP(+) = (2S)-2-acetolactate + NADPH + H(+). It catalyses the reaction (2R,3R)-2,3-dihydroxy-3-methylpentanoate + NADP(+) = (S)-2-ethyl-2-hydroxy-3-oxobutanoate + NADPH + H(+). It participates in amino-acid biosynthesis; L-isoleucine biosynthesis; L-isoleucine from 2-oxobutanoate: step 2/4. It functions in the pathway amino-acid biosynthesis; L-valine biosynthesis; L-valine from pyruvate: step 2/4. Involved in the biosynthesis of branched-chain amino acids (BCAA). Catalyzes an alkyl-migration followed by a ketol-acid reduction of (S)-2-acetolactate (S2AL) to yield (R)-2,3-dihydroxy-isovalerate. In the isomerase reaction, S2AL is rearranged via a Mg-dependent methyl migration to produce 3-hydroxy-3-methyl-2-ketobutyrate (HMKB). In the reductase reaction, this 2-ketoacid undergoes a metal-dependent reduction by NADPH to yield (R)-2,3-dihydroxy-isovalerate. The protein is Ketol-acid reductoisomerase (NADP(+)) of Thiobacillus denitrificans (strain ATCC 25259 / T1).